We begin with the raw amino-acid sequence, 113 residues long: Antisense of depressing factor protein 1 (113 aa).

Over residues 1 to 11 (MGKCSMKKKGV) the composition is skewed to basic residues. The interval 1-35 (MGKCSMKKKGVGKNVGVGKKVQKKRSISTAERKRT) is disordered.

It belongs to the ADF1 family.

It localises to the nucleus. In terms of biological role, transcriptional repressor which negatively regulates transcription of FYV5 by binding to the promoter on the sense strand. The chain is Antisense of depressing factor protein 1 from Saccharomyces cerevisiae (strain ATCC 204508 / S288c) (Baker's yeast).